The following is a 309-amino-acid chain: Ras-like protein 1 (309 aa).

Residues 20–25 (GVGKSA), 36–42 (VDEYDPT), 66–67 (AG), 123–126 (NKLD), and 153–155 (SAK) contribute to the GTP site. The Effector region motif lies at 39 to 47 (YDPTIEDSY). The disordered stretch occupies residues 177 to 303 (KYNSMNRQLD…SANARKESSG (127 aa)). 2 stretches are compositionally biased toward polar residues: residues 179 to 188 (NSMNRQLDNT) and 209 to 235 (NGSY…NHNG). Residues 236–245 (ETTKRTDEKN) show a composition bias toward basic and acidic residues. A compositionally biased stretch (low complexity) spans 246-256 (YVNQNNNNEGN). Residues 257-296 (TKYSSNGNGNRSDISRGNQNNALNSRSKQSAEPQKNSSAN) are compositionally biased toward polar residues. Cysteine 305 carries S-palmitoyl cysteine lipidation. Cysteine 306 carries the post-translational modification Cysteine methyl ester. Residue cysteine 306 is the site of S-farnesyl cysteine attachment. The propeptide at 307 to 309 (IIC) is removed in mature form.

This sequence belongs to the small GTPase superfamily. Ras family. Farnesylated by RAM1-RAM2, which is required for targeting RAS1 to the cytoplasmic site of the endoplasmic reticulum, where proteolytic processing of the C-terminus by RCE1 and methylation of the resulting carboxyl group by STE14 occurs. Post-translationally, palmitoylated by the ERF2-SHR5 complex, which is required for proper plasma membrane localization of RAS1.

It is found in the cell membrane. The enzyme catalyses GTP + H2O = GDP + phosphate + H(+). With respect to regulation, alternates between an inactive form bound to GDP and an active form bound to GTP. Activated by guanine nucleotide-exchange factor (GEF) CDC25 and inactivated by GTPase-activating proteins (GAPs) IRA1 and IRA2. Functionally, the S.cerevisiae Ras proteins modulate the activity of the adenylate cyclase catalytic subunit and therefore affect the biosynthesis of cyclic-AMP. The chain is Ras-like protein 1 (RAS1) from Saccharomyces cerevisiae (strain ATCC 204508 / S288c) (Baker's yeast).